The sequence spans 689 residues: Armadillo-like helical domain-containing protein 3 (689 aa).

A helical membrane pass occupies residues 520–538 (IFQLALQVVNLFNMFITYG).

This sequence belongs to the ARMH3 family.

It is found in the golgi apparatus membrane. The protein resides in the cytoplasm. In terms of biological role, may be involved in Golgi maintenance and protein secretion. The polypeptide is Armadillo-like helical domain-containing protein 3 (Danio rerio (Zebrafish)).